Here is a 189-residue protein sequence, read N- to C-terminus: Inner membrane-spanning protein YciB (189 aa).

Transmembrane regions (helical) follow at residues 3 to 23, 47 to 67, 76 to 96, 121 to 141, and 149 to 169; these read LLID…WGIY, IEPM…ATLL, WKPT…QLFF, WSWT…AHAF, and FKLF…ALYL.

Belongs to the YciB family.

Its subcellular location is the cell inner membrane. In terms of biological role, plays a role in cell envelope biogenesis, maintenance of cell envelope integrity and membrane homeostasis. The protein is Inner membrane-spanning protein YciB of Paracidovorax citrulli (strain AAC00-1) (Acidovorax citrulli).